The sequence spans 248 residues: MNNISNRRQPPASLAPRDLAALIDISAVQAFHTEADVRELAGIAVAEGFIAAHALPNFVPLLRSLVPSGGLTLVGGPVGFPSGGHSTRTKTAEAVELAENGAQELDMMINVGRIKSGDFGYVRSEIRAIVEAIAPVPLKVILELAHLTDEEIRAASAIVAESGAAFVKTGTGWTPSATTLEKLKLIVETVGGAVEIKASGGIRSLDAIAGMMRLGVTRFGINTQVAVDLVRQCAALPGGRLDIAGKAG.

The active-site Proton donor/acceptor is Asp106. Lys168 serves as the catalytic Schiff-base intermediate with acetaldehyde. Residue Lys197 is the Proton donor/acceptor of the active site.

The protein belongs to the DeoC/FbaB aldolase family. DeoC type 1 subfamily.

The protein resides in the cytoplasm. The catalysed reaction is 2-deoxy-D-ribose 5-phosphate = D-glyceraldehyde 3-phosphate + acetaldehyde. It participates in carbohydrate degradation; 2-deoxy-D-ribose 1-phosphate degradation; D-glyceraldehyde 3-phosphate and acetaldehyde from 2-deoxy-alpha-D-ribose 1-phosphate: step 2/2. In terms of biological role, catalyzes a reversible aldol reaction between acetaldehyde and D-glyceraldehyde 3-phosphate to generate 2-deoxy-D-ribose 5-phosphate. This is Deoxyribose-phosphate aldolase from Rhizobium meliloti (strain 1021) (Ensifer meliloti).